The following is a 325-amino-acid chain: Elongation factor P--(R)-beta-lysine ligase (325 aa).

Residue 76–78 (SPE) participates in substrate binding. ATP contacts are provided by residues 100–102 (RNE) and N109. Y118 provides a ligand contact to substrate. Residue 244 to 245 (EL) coordinates ATP. A substrate-binding site is contributed by E251. Position 300 (G300) interacts with ATP.

It belongs to the class-II aminoacyl-tRNA synthetase family. EpmA subfamily. Homodimer.

The enzyme catalyses D-beta-lysine + L-lysyl-[protein] + ATP = N(6)-((3R)-3,6-diaminohexanoyl)-L-lysyl-[protein] + AMP + diphosphate + H(+). With EpmB is involved in the beta-lysylation step of the post-translational modification of translation elongation factor P (EF-P) on 'Lys-34'. Catalyzes the ATP-dependent activation of (R)-beta-lysine produced by EpmB, forming a lysyl-adenylate, from which the beta-lysyl moiety is then transferred to the epsilon-amino group of EF-P 'Lys-34'. In Salmonella arizonae (strain ATCC BAA-731 / CDC346-86 / RSK2980), this protein is Elongation factor P--(R)-beta-lysine ligase.